Consider the following 196-residue polypeptide: Imidazole glycerol phosphate synthase subunit HisH (196 aa).

Positions 2-196 (KATLINYGVG…LRNFYSWVKR (195 aa)) constitute a Glutamine amidotransferase type-1 domain. Cys76 serves as the catalytic Nucleophile. Residues His175 and Glu177 contribute to the active site.

As to quaternary structure, heterodimer of HisH and HisF.

It localises to the cytoplasm. It catalyses the reaction 5-[(5-phospho-1-deoxy-D-ribulos-1-ylimino)methylamino]-1-(5-phospho-beta-D-ribosyl)imidazole-4-carboxamide + L-glutamine = D-erythro-1-(imidazol-4-yl)glycerol 3-phosphate + 5-amino-1-(5-phospho-beta-D-ribosyl)imidazole-4-carboxamide + L-glutamate + H(+). It carries out the reaction L-glutamine + H2O = L-glutamate + NH4(+). It functions in the pathway amino-acid biosynthesis; L-histidine biosynthesis; L-histidine from 5-phospho-alpha-D-ribose 1-diphosphate: step 5/9. IGPS catalyzes the conversion of PRFAR and glutamine to IGP, AICAR and glutamate. The HisH subunit catalyzes the hydrolysis of glutamine to glutamate and ammonia as part of the synthesis of IGP and AICAR. The resulting ammonia molecule is channeled to the active site of HisF. This Sulfurisphaera tokodaii (strain DSM 16993 / JCM 10545 / NBRC 100140 / 7) (Sulfolobus tokodaii) protein is Imidazole glycerol phosphate synthase subunit HisH.